We begin with the raw amino-acid sequence, 61 residues long: Prophage outer membrane lipoprotein RzoR (61 aa).

An N-terminal signal peptide occupies residues Met1–Gly19. Cys20 is lipidated: N-palmitoyl cysteine. The S-diacylglycerol cysteine moiety is linked to residue Cys20.

The protein belongs to the lambdalikevirus o-spanin family. In terms of assembly, homodimer; disulfide-linked. Interacts (via C-terminus) with RZ (via C-terminus). Part of the spanin complex which spans the entire periplasmic space. The spanin complex is composed of spanin, inner membrane subunit and spanin, outer membrane subunit.

It is found in the cell outer membrane. In terms of biological role, component of the spanin complex that disrupts the outer membrane and causes cell lysis during virus exit. The spanin complex conducts the final step in cell lysis by disrupting the outer membrane after holin and endolysin action have permeabilized the inner membrane and degraded the host peptidoglycans. This is Prophage outer membrane lipoprotein RzoR (rzoR) from Escherichia coli (strain K12).